Reading from the N-terminus, the 369-residue chain is S-adenosylmethionine decarboxylase proenzyme 2 (369 aa).

Residues Glu9 and Glu12 contribute to the active site. Residue Ser69 is the Schiff-base intermediate with substrate; via pyruvic acid of the active site. Ser69 carries the post-translational modification Pyruvic acid (Ser); by autocatalysis. Cys83 serves as the catalytic Proton donor; for catalytic activity. Catalysis depends on proton acceptor; for processing activity residues Ser236 and His249.

The protein belongs to the eukaryotic AdoMetDC family. It depends on pyruvate as a cofactor. Post-translationally, is synthesized initially as an inactive proenzyme. Formation of the active enzyme involves a self-maturation process in which the active site pyruvoyl group is generated from an internal serine residue via an autocatalytic post-translational modification. Two non-identical subunits are generated from the proenzyme in this reaction, and the pyruvate is formed at the N-terminus of the alpha chain, which is derived from the carboxyl end of the proenzyme. The post-translation cleavage follows an unusual pathway, termed non-hydrolytic serinolysis, in which the side chain hydroxyl group of the serine supplies its oxygen atom to form the C-terminus of the beta chain, while the remainder of the serine residue undergoes an oxidative deamination to produce ammonia and the pyruvoyl group blocking the N-terminus of the alpha chain.

It carries out the reaction S-adenosyl-L-methionine + H(+) = S-adenosyl 3-(methylsulfanyl)propylamine + CO2. Its pathway is amine and polyamine biosynthesis; S-adenosylmethioninamine biosynthesis; S-adenosylmethioninamine from S-adenosyl-L-methionine: step 1/1. The polypeptide is S-adenosylmethionine decarboxylase proenzyme 2 (SAMDC2) (Brassica juncea (Indian mustard)).